A 254-amino-acid chain; its full sequence is uncharacterized protein (254 aa).

The segment at 163 to 182 is disordered; that stretch reads PNKHTQHKRSTRRTSPKDYN. The segment covering 166–176 has biased composition (basic residues); it reads HTQHKRSTRRT. Residues 207-227 traverse the membrane as a helical segment; the sequence is AHSAWILIIIIIIIVVILFFF.

The protein belongs to the RL11 family.

It is found in the host membrane. This is an uncharacterized protein from Human cytomegalovirus (strain Merlin) (HHV-5).